Consider the following 249-residue polypeptide: Quinate/shikimate dehydrogenase (249 aa).

Substrate contacts are provided by Lys32 and Asp68. NAD(+) is bound by residues 93-96 (AGGA), 116-119 (NRRD), Lys166, 193-196 (CVYN), and Gly216.

The protein belongs to the shikimate dehydrogenase family. Homodimer.

The enzyme catalyses L-quinate + NAD(+) = 3-dehydroquinate + NADH + H(+). It catalyses the reaction L-quinate + NADP(+) = 3-dehydroquinate + NADPH + H(+). It carries out the reaction shikimate + NADP(+) = 3-dehydroshikimate + NADPH + H(+). The catalysed reaction is shikimate + NAD(+) = 3-dehydroshikimate + NADH + H(+). It functions in the pathway metabolic intermediate biosynthesis; chorismate biosynthesis; chorismate from D-erythrose 4-phosphate and phosphoenolpyruvate: step 4/7. In terms of biological role, the actual biological function of YdiB remains unclear, nor is it known whether 3-dehydroshikimate or quinate represents the natural substrate. Catalyzes the reversible NAD-dependent reduction of both 3-dehydroshikimate (DHSA) and 3-dehydroquinate to yield shikimate (SA) and quinate, respectively. It can use both NAD or NADP for catalysis, however it has higher catalytic efficiency with NAD. This Shigella flexneri serotype 5b (strain 8401) protein is Quinate/shikimate dehydrogenase.